The following is a 1409-amino-acid chain: Protein three rows (1409 aa).

The interval 1052–1058 is separase cleavage-site; that stretch reads VEPIRKQ. 2 disordered regions span residues 1260–1284 and 1297–1409; these read PIGC…SDHV and DDAA…RQRN. 2 stretches are compositionally biased toward low complexity: residues 1264–1273 and 1300–1310; these read SNSSSSSSKS and ASVSASTPAPS.

Interacts with pim and Sse. Cleavage of thr contributes to inactivation of Sse.

It is found in the cytoplasm. In terms of biological role, required specifically for chromosome disjunction during all mitoses; maternally provided protein is sufficient until mitosis 14 then zygotic protein is required. Involved in formation and/or maintenance of epithelial structures: bud extension during Malpighian tubule development, and foregut and hindgut morphogenesis. This chain is Protein three rows (thr), found in Drosophila pseudoobscura pseudoobscura (Fruit fly).